The following is a 711-amino-acid chain: Glycine--tRNA ligase beta subunit (711 aa).

The protein belongs to the class-II aminoacyl-tRNA synthetase family. As to quaternary structure, tetramer of two alpha and two beta subunits.

The protein resides in the cytoplasm. The enzyme catalyses tRNA(Gly) + glycine + ATP = glycyl-tRNA(Gly) + AMP + diphosphate. This is Glycine--tRNA ligase beta subunit from Polaromonas naphthalenivorans (strain CJ2).